The primary structure comprises 102 residues: Large ribosomal subunit protein bL21 (102 aa).

It belongs to the bacterial ribosomal protein bL21 family. As to quaternary structure, part of the 50S ribosomal subunit. Contacts protein L20.

This protein binds to 23S rRNA in the presence of protein L20. The protein is Large ribosomal subunit protein bL21 of Enterococcus faecalis (strain ATCC 700802 / V583).